The sequence spans 658 residues: DNA mismatch repair protein MutL (658 aa).

A compositionally biased stretch (basic and acidic residues) spans 114–130 (RQEDSSHATQVKAEDGK). Residues 114–137 (RQEDSSHATQVKAEDGKLSSPTAA) are disordered.

The protein belongs to the DNA mismatch repair MutL/HexB family.

Its function is as follows. This protein is involved in the repair of mismatches in DNA. It is required for dam-dependent methyl-directed DNA mismatch repair. May act as a 'molecular matchmaker', a protein that promotes the formation of a stable complex between two or more DNA-binding proteins in an ATP-dependent manner without itself being part of a final effector complex. The chain is DNA mismatch repair protein MutL from Neisseria meningitidis serogroup C / serotype 2a (strain ATCC 700532 / DSM 15464 / FAM18).